Consider the following 287-residue polypeptide: ATP synthase gamma chain (287 aa).

Belongs to the ATPase gamma chain family. In terms of assembly, F-type ATPases have 2 components, CF(1) - the catalytic core - and CF(0) - the membrane proton channel. CF(1) has five subunits: alpha(3), beta(3), gamma(1), delta(1), epsilon(1). CF(0) has three main subunits: a, b and c.

The protein localises to the cell inner membrane. Functionally, produces ATP from ADP in the presence of a proton gradient across the membrane. The gamma chain is believed to be important in regulating ATPase activity and the flow of protons through the CF(0) complex. This Tolumonas auensis (strain DSM 9187 / NBRC 110442 / TA 4) protein is ATP synthase gamma chain.